A 162-amino-acid chain; its full sequence is Cyclic pyranopterin monophosphate synthase (162 aa).

Substrate contacts are provided by residues Leu-79–His-81 and Met-117–Glu-118. The active site involves Asp-132.

This sequence belongs to the MoaC family. As to quaternary structure, homohexamer; trimer of dimers.

The enzyme catalyses (8S)-3',8-cyclo-7,8-dihydroguanosine 5'-triphosphate = cyclic pyranopterin phosphate + diphosphate. The protein operates within cofactor biosynthesis; molybdopterin biosynthesis. Functionally, catalyzes the conversion of (8S)-3',8-cyclo-7,8-dihydroguanosine 5'-triphosphate to cyclic pyranopterin monophosphate (cPMP). The protein is Cyclic pyranopterin monophosphate synthase of Bordetella avium (strain 197N).